Consider the following 187-residue polypeptide: Adenine phosphoribosyltransferase (187 aa).

Belongs to the purine/pyrimidine phosphoribosyltransferase family. As to quaternary structure, homodimer.

It is found in the cytoplasm. It carries out the reaction AMP + diphosphate = 5-phospho-alpha-D-ribose 1-diphosphate + adenine. Its pathway is purine metabolism; AMP biosynthesis via salvage pathway; AMP from adenine: step 1/1. Its function is as follows. Catalyzes a salvage reaction resulting in the formation of AMP, that is energically less costly than de novo synthesis. In Paracoccus denitrificans (strain Pd 1222), this protein is Adenine phosphoribosyltransferase.